Here is a 112-residue protein sequence, read N- to C-terminus: MEARAIARYVRISPRKARLVLNLIRGKHVDEALAILKFTPKKASKIVEKVLKSAIANAENNHNMNRDNLYVAKAVADEGPTMKRVLPRAMGRADIMRRRTSHITIVVKEKEE.

Belongs to the universal ribosomal protein uL22 family. In terms of assembly, part of the 50S ribosomal subunit.

In terms of biological role, this protein binds specifically to 23S rRNA; its binding is stimulated by other ribosomal proteins, e.g. L4, L17, and L20. It is important during the early stages of 50S assembly. It makes multiple contacts with different domains of the 23S rRNA in the assembled 50S subunit and ribosome. Functionally, the globular domain of the protein is located near the polypeptide exit tunnel on the outside of the subunit, while an extended beta-hairpin is found that lines the wall of the exit tunnel in the center of the 70S ribosome. This chain is Large ribosomal subunit protein uL22, found in Caldanaerobacter subterraneus subsp. tengcongensis (strain DSM 15242 / JCM 11007 / NBRC 100824 / MB4) (Thermoanaerobacter tengcongensis).